A 332-amino-acid chain; its full sequence is DNA-directed RNA polymerase subunit alpha (332 aa).

The tract at residues 1-227 (MKKFAETPFL…VMYSQMSVFN (227 aa)) is alpha N-terminal domain (alpha-NTD). Positions 248-332 (KELVIRIDDL…LRRKLEQLKA (85 aa)) are alpha C-terminal domain (alpha-CTD).

The protein belongs to the RNA polymerase alpha chain family. As to quaternary structure, homodimer. The RNAP catalytic core consists of 2 alpha, 1 beta, 1 beta' and 1 omega subunit. When a sigma factor is associated with the core the holoenzyme is formed, which can initiate transcription.

It carries out the reaction RNA(n) + a ribonucleoside 5'-triphosphate = RNA(n+1) + diphosphate. DNA-dependent RNA polymerase catalyzes the transcription of DNA into RNA using the four ribonucleoside triphosphates as substrates. In Aliarcobacter butzleri (strain RM4018) (Arcobacter butzleri), this protein is DNA-directed RNA polymerase subunit alpha.